We begin with the raw amino-acid sequence, 473 residues long: Glutamate--tRNA ligase 1 (473 aa).

Positions 10-20 (PSPTGFLHIGG) match the 'HIGH' region motif. Positions 252 to 256 (KLSKR) match the 'KMSKS' region motif. K255 provides a ligand contact to ATP.

It belongs to the class-I aminoacyl-tRNA synthetase family. Glutamate--tRNA ligase type 1 subfamily. As to quaternary structure, monomer.

The protein resides in the cytoplasm. It catalyses the reaction tRNA(Glu) + L-glutamate + ATP = L-glutamyl-tRNA(Glu) + AMP + diphosphate. Functionally, catalyzes the attachment of glutamate to tRNA(Glu) in a two-step reaction: glutamate is first activated by ATP to form Glu-AMP and then transferred to the acceptor end of tRNA(Glu). The sequence is that of Glutamate--tRNA ligase 1 from Wolbachia pipientis wMel.